The sequence spans 521 residues: Glutamyl-tRNA(Gln) amidotransferase subunit B, mitochondrial (521 aa).

A mitochondrion-targeting transit peptide spans 1-22 (MIALLRWGIARPSAPLRWSRCF).

It belongs to the GatB/GatE family. GatB subfamily. In terms of assembly, subunit of the heterotrimeric GatCAB amidotransferase (AdT) complex, composed of A, B and C subunits.

It localises to the mitochondrion. It carries out the reaction L-glutamyl-tRNA(Gln) + L-glutamine + ATP + H2O = L-glutaminyl-tRNA(Gln) + L-glutamate + ADP + phosphate + H(+). Its function is as follows. Allows the formation of correctly charged Gln-tRNA(Gln) through the transamidation of misacylated Glu-tRNA(Gln) in the mitochondria. The reaction takes place in the presence of glutamine and ATP through an activated gamma-phospho-Glu-tRNA(Gln). This Cryptococcus neoformans var. neoformans serotype D (strain JEC21 / ATCC MYA-565) (Filobasidiella neoformans) protein is Glutamyl-tRNA(Gln) amidotransferase subunit B, mitochondrial.